The primary structure comprises 234 residues: Interleukin-27 subunit alpha (234 aa).

The first 28 residues, 1-28 (MGQVTGDLGWRLSLLLLPLLLVQAGSWG), serve as a signal peptide directing secretion. Residue asparagine 85 is glycosylated (N-linked (GlcNAc...) asparagine). Residues 160 to 185 (KEEEDKEEEEEEEEEEKKLPLGALGG) are disordered. Residues 161 to 174 (EEEDKEEEEEEEEE) are compositionally biased toward acidic residues.

Belongs to the IL-6 superfamily. As to quaternary structure, heterodimer with EBI3; not disulfide-linked. This heterodimer is known as interleukin IL-27. O-glycosylated. In terms of tissue distribution, expressed in macrophages and dendritic cells.

The protein localises to the secreted. Its function is as follows. Associates with EBI3 to form the IL-27 interleukin, a heterodimeric cytokine which functions in innate immunity. IL-27 has pro- and anti-inflammatory properties, that can regulate T-helper cell development, suppress T-cell proliferation, stimulate cytotoxic T-cell activity, induce isotype switching in B-cells, and that has diverse effects on innate immune cells. Among its target cells are CD4 T-helper cells which can differentiate in type 1 effector cells (TH1), type 2 effector cells (TH2) and IL17 producing helper T-cells (TH17). It drives rapid clonal expansion of naive but not memory CD4 T-cells. It also strongly synergizes with IL-12 to trigger interferon-gamma/IFN-gamma production of naive CD4 T-cells, binds to the cytokine receptor WSX-1/TCCR which appears to be required but not sufficient for IL-27-mediated signal transduction. IL-27 potentiate the early phase of TH1 response and suppress TH2 and TH17 differentiation. It induces the differentiation of TH1 cells via two distinct pathways, p38 MAPK/TBX21- and ICAM1/ITGAL/ERK-dependent pathways. It also induces STAT1, STAT3, STAT4 and STAT5 phosphorylation and activates TBX21/T-Bet via STAT1 with resulting IL12RB2 up-regulation, an event crucial to TH1 cell commitment. It suppresses the expression of GATA3, the inhibitor TH1 cells development. In CD8 T-cells, it activates STATs as well as GZMB. IL-27 reveals to be a potent inhibitor of TH17 cell development and of IL-17 production. Indeed IL27 alone is also able to inhibit the production of IL17 by CD4 and CD8 T-cells. While IL-27 suppressed the development of pro-inflammatory Th17 cells via STAT1, it inhibits the development of anti-inflammatory inducible regulatory T-cells, iTreg, independently of STAT1. IL-27 also has an effect on cytokine production, it suppresses pro-inflammatory cytokine production such as IL2, IL4, IL5 and IL6 and activates suppressors of cytokine signaling such as SOCS1 and SOCS3. Apart from suppression of cytokine production, IL-27 also antagonizes the effects of some cytokines such as IL6 through direct effects on T-cells. Another important role of IL-27 is its antitumor activity as well as its antiangiogenic activity with activation of production of antiangiogenic chemokines such as IP-10/CXCL10 and MIG/CXCL9. In Mus musculus (Mouse), this protein is Interleukin-27 subunit alpha (Il27).